Here is an 89-residue protein sequence, read N- to C-terminus: Large ribosomal subunit protein eL37A (89 aa).

Zn(2+) is bound by residues Cys19, Cys22, Cys34, and Cys37. The segment at 19–37 (CRRCGKRSFHIQKSTCACC) adopts a C4-type zinc-finger fold.

This sequence belongs to the eukaryotic ribosomal protein eL37 family. As to quaternary structure, component of the large ribosomal subunit (LSU). Mature yeast ribosomes consist of a small (40S) and a large (60S) subunit. The 40S small subunit contains 1 molecule of ribosomal RNA (18S rRNA) and at least 33 different proteins. The large 60S subunit contains 3 rRNA molecules (25S, 5.8S and 5S rRNA) and at least 46 different proteins. Zn(2+) is required as a cofactor.

It localises to the cytoplasm. Component of the ribosome, a large ribonucleoprotein complex responsible for the synthesis of proteins in the cell. The small ribosomal subunit (SSU) binds messenger RNAs (mRNAs) and translates the encoded message by selecting cognate aminoacyl-transfer RNA (tRNA) molecules. The large subunit (LSU) contains the ribosomal catalytic site termed the peptidyl transferase center (PTC), which catalyzes the formation of peptide bonds, thereby polymerizing the amino acids delivered by tRNAs into a polypeptide chain. The nascent polypeptides leave the ribosome through a tunnel in the LSU and interact with protein factors that function in enzymatic processing, targeting, and the membrane insertion of nascent chains at the exit of the ribosomal tunnel. In Schizosaccharomyces pombe (strain 972 / ATCC 24843) (Fission yeast), this protein is Large ribosomal subunit protein eL37A (rpl3703).